Consider the following 279-residue polypeptide: Undecaprenyl-diphosphatase (279 aa).

The next 8 helical transmembrane spans lie at 2-22 (LIIE…TEWL), 44-64 (AFIE…VMLI), 85-105 (WQLW…AVPL), 113-133 (FYFM…FIWI), 163-183 (VLSI…AIIL), 188-208 (TVAA…YSGL), 223-243 (AQVL…LLAI), and 255-275 (FTIF…YSFF).

It belongs to the UppP family.

The protein resides in the cell membrane. The enzyme catalyses di-trans,octa-cis-undecaprenyl diphosphate + H2O = di-trans,octa-cis-undecaprenyl phosphate + phosphate + H(+). Its function is as follows. Catalyzes the dephosphorylation of undecaprenyl diphosphate (UPP). Confers resistance to bacitracin. In Streptococcus pyogenes serotype M12 (strain MGAS2096), this protein is Undecaprenyl-diphosphatase.